Here is a 795-residue protein sequence, read N- to C-terminus: Protocadherin beta-4 (795 aa).

A signal peptide spans methionine 1–leucine 27. Residues glutamate 28–leucine 689 lie on the Extracellular side of the membrane. Cadherin domains are found at residues valine 34–phenylalanine 132, valine 137–phenylalanine 241, tyrosine 246–leucine 346, leucine 351–phenylalanine 450, and tyrosine 455–valine 560. A glycan (N-linked (GlcNAc...) asparagine) is linked at asparagine 183. N-linked (GlcNAc...) asparagine glycans are attached at residues asparagine 417 and asparagine 435. N-linked (GlcNAc...) asparagine glycosylation is present at asparagine 566. The Cadherin 6 domain occupies glycine 567 to leucine 670. The chain crosses the membrane as a helical span at residues valine 690–valine 710. Over arginine 711–serine 795 the chain is Cytoplasmic.

The protein localises to the cell membrane. In terms of biological role, potential calcium-dependent cell-adhesion protein. May be involved in the establishment and maintenance of specific neuronal connections in the brain. This Homo sapiens (Human) protein is Protocadherin beta-4 (PCDHB4).